The following is a 368-amino-acid chain: Biotin synthase (368 aa).

A Radical SAM core domain is found at C74–R309. [4Fe-4S] cluster is bound by residues C92, C96, and C99. [2Fe-2S] cluster is bound by residues C137, C174, C234, and R304.

It belongs to the radical SAM superfamily. Biotin synthase family. As to quaternary structure, homodimer. Requires [4Fe-4S] cluster as cofactor. The cofactor is [2Fe-2S] cluster.

The enzyme catalyses (4R,5S)-dethiobiotin + (sulfur carrier)-SH + 2 reduced [2Fe-2S]-[ferredoxin] + 2 S-adenosyl-L-methionine = (sulfur carrier)-H + biotin + 2 5'-deoxyadenosine + 2 L-methionine + 2 oxidized [2Fe-2S]-[ferredoxin]. Its pathway is cofactor biosynthesis; biotin biosynthesis; biotin from 7,8-diaminononanoate: step 2/2. Its function is as follows. Catalyzes the conversion of dethiobiotin (DTB) to biotin by the insertion of a sulfur atom into dethiobiotin via a radical-based mechanism. The sequence is that of Biotin synthase from Rippkaea orientalis (strain PCC 8801 / RF-1) (Cyanothece sp. (strain PCC 8801)).